Here is a 108-residue protein sequence, read N- to C-terminus: Phosphoribosyl-AMP cyclohydrolase (108 aa).

Mg(2+) is bound at residue Asp-73. Cys-74 is a Zn(2+) binding site. The Mg(2+) site is built by Asp-75 and Asp-77. 2 residues coordinate Zn(2+): Cys-90 and Cys-97.

It belongs to the PRA-CH family. In terms of assembly, homodimer. It depends on Mg(2+) as a cofactor. Requires Zn(2+) as cofactor.

The protein localises to the cytoplasm. It carries out the reaction 1-(5-phospho-beta-D-ribosyl)-5'-AMP + H2O = 1-(5-phospho-beta-D-ribosyl)-5-[(5-phospho-beta-D-ribosylamino)methylideneamino]imidazole-4-carboxamide. Its pathway is amino-acid biosynthesis; L-histidine biosynthesis; L-histidine from 5-phospho-alpha-D-ribose 1-diphosphate: step 3/9. Functionally, catalyzes the hydrolysis of the adenine ring of phosphoribosyl-AMP. The protein is Phosphoribosyl-AMP cyclohydrolase of Lactiplantibacillus plantarum (strain ATCC BAA-793 / NCIMB 8826 / WCFS1) (Lactobacillus plantarum).